We begin with the raw amino-acid sequence, 215 residues long: Glutathione S-transferase D4 (215 aa).

The GST N-terminal domain maps to 1–80 (MDFYYSPRSS…YLVEKYGKDD (80 aa)). Residues S9, 50 to 52 (HTI), and 64 to 66 (ESR) contribute to the glutathione site. One can recognise a GST C-terminal domain in the interval 86-207 (DPQKRALINQ…KGLLQMKTMY (122 aa)).

It belongs to the GST superfamily. Delta family. As to quaternary structure, homodimer.

It carries out the reaction RX + glutathione = an S-substituted glutathione + a halide anion + H(+). Functionally, conjugation of reduced glutathione to a wide number of exogenous and endogenous hydrophobic electrophiles. May be involved in detoxification. The sequence is that of Glutathione S-transferase D4 from Drosophila melanogaster (Fruit fly).